Consider the following 235-residue polypeptide: MYYVTPRQLVFPGDVIATADSKVEGPVYLDNGKYRSLVVGLVEFREDVVVVVPLEGTYKPKKGDLVIGYVTDVLATGWEVDVRSFMPAYLPVGEALHRHVDLETTPLTTFLNIGDVVVAKVKDVDLTDEYPIILTLKDEKVGKVESGTVVEITPVKVPRVIGKRGSMLNTLMELGCDIVVGQNGRIWVKCKDPRDEVFLASLIRKIEAESHVMGLTDRIRAEIENYKTSKQQGTV.

In terms of domain architecture, S1 motif spans 63 to 137 (GDLVIGYVTD…DEYPIILTLK (75 aa)). One can recognise a KH domain in the interval 147–203 (GTVVEITPVKVPRVIGKRGSMLNTLMELGCDIVVGQNGRIWVKCKDPRDEVFLASLI).

It belongs to the RRP4 family. Component of the archaeal exosome complex. Forms a trimer of Rrp4 and/or Csl4 subunits. The trimer associates with a hexameric ring-like arrangement composed of 3 Rrp41-Rrp42 heterodimers.

The protein resides in the cytoplasm. Non-catalytic component of the exosome, which is a complex involved in RNA degradation. Increases the RNA binding and the efficiency of RNA degradation. Confers strong poly(A) specificity to the exosome. The sequence is that of Exosome complex component Rrp4 from Pyrobaculum aerophilum (strain ATCC 51768 / DSM 7523 / JCM 9630 / CIP 104966 / NBRC 100827 / IM2).